The chain runs to 377 residues: Chaperone protein DnaJ (377 aa).

A J domain is found at 4–69 (DYYEALGVER…QKRAAYDRFG (66 aa)). Residues 135 to 213 (GKTAQIRVPT…CHGQGRVTQE (79 aa)) form a CR-type zinc finger. 8 residues coordinate Zn(2+): cysteine 148, cysteine 151, cysteine 165, cysteine 168, cysteine 187, cysteine 190, cysteine 201, and cysteine 204. CXXCXGXG motif repeat units follow at residues 148 to 155 (CDECSGSG), 165 to 172 (CTMCSGSG), 187 to 194 (CPTCNGRG), and 201 to 208 (CGKCHGQG).

This sequence belongs to the DnaJ family. Homodimer. It depends on Zn(2+) as a cofactor.

It localises to the cytoplasm. Functionally, participates actively in the response to hyperosmotic and heat shock by preventing the aggregation of stress-denatured proteins and by disaggregating proteins, also in an autonomous, DnaK-independent fashion. Unfolded proteins bind initially to DnaJ; upon interaction with the DnaJ-bound protein, DnaK hydrolyzes its bound ATP, resulting in the formation of a stable complex. GrpE releases ADP from DnaK; ATP binding to DnaK triggers the release of the substrate protein, thus completing the reaction cycle. Several rounds of ATP-dependent interactions between DnaJ, DnaK and GrpE are required for fully efficient folding. Also involved, together with DnaK and GrpE, in the DNA replication of plasmids through activation of initiation proteins. The chain is Chaperone protein DnaJ from Brucella anthropi (strain ATCC 49188 / DSM 6882 / CCUG 24695 / JCM 21032 / LMG 3331 / NBRC 15819 / NCTC 12168 / Alc 37) (Ochrobactrum anthropi).